A 266-amino-acid polypeptide reads, in one-letter code: Putative pyruvate, phosphate dikinase regulatory protein (266 aa).

Residue 147–154 (GLSRTSKT) coordinates ADP.

Belongs to the pyruvate, phosphate/water dikinase regulatory protein family. PDRP subfamily.

It catalyses the reaction N(tele)-phospho-L-histidyl/L-threonyl-[pyruvate, phosphate dikinase] + ADP = N(tele)-phospho-L-histidyl/O-phospho-L-threonyl-[pyruvate, phosphate dikinase] + AMP + H(+). The enzyme catalyses N(tele)-phospho-L-histidyl/O-phospho-L-threonyl-[pyruvate, phosphate dikinase] + phosphate + H(+) = N(tele)-phospho-L-histidyl/L-threonyl-[pyruvate, phosphate dikinase] + diphosphate. Its function is as follows. Bifunctional serine/threonine kinase and phosphorylase involved in the regulation of the pyruvate, phosphate dikinase (PPDK) by catalyzing its phosphorylation/dephosphorylation. This Clostridium perfringens (strain SM101 / Type A) protein is Putative pyruvate, phosphate dikinase regulatory protein.